The following is a 196-amino-acid chain: Rac-like GTP-binding protein RAC9 (196 aa).

13 to 20 contacts GTP; the sequence is GDGAVGKT. Residues 35–43 carry the Effector region motif; that stretch reads YVPTVFDNF. GTP is bound by residues 60–64 and 118–121; these read DTAGQ and TKLD. The residue at position 193 (Cys-193) is a Cysteine methyl ester. Cys-193 carries the S-geranylgeranyl cysteine lipid modification. The propeptide at 194–196 is removed in mature form; it reads AFL.

It belongs to the small GTPase superfamily. Rho family.

It is found in the cytoplasm. It localises to the membrane. Inactive GDP-bound Rho GTPases reside in the cytosol, are found in a complex with Rho GDP-dissociation inhibitors (Rho GDIs), and are released from the GDI protein in order to translocate to membranes upon activation. In Gossypium hirsutum (Upland cotton), this protein is Rac-like GTP-binding protein RAC9 (RAC9).